The chain runs to 296 residues: ATP synthase gamma chain (296 aa).

It belongs to the ATPase gamma chain family. F-type ATPases have 2 components, CF(1) - the catalytic core - and CF(0) - the membrane proton channel. CF(1) has five subunits: alpha(3), beta(3), gamma(1), delta(1), epsilon(1). CF(0) has three main subunits: a, b and c.

It is found in the cell inner membrane. Functionally, produces ATP from ADP in the presence of a proton gradient across the membrane. The gamma chain is believed to be important in regulating ATPase activity and the flow of protons through the CF(0) complex. This chain is ATP synthase gamma chain, found in Jannaschia sp. (strain CCS1).